A 158-amino-acid polypeptide reads, in one-letter code: Cell number regulator 11 (158 aa).

The next 2 helical transmembrane spans lie at 49-67 (FGDL…VTFG) and 78-94 (TCCM…TIGW).

This sequence belongs to the cornifelin family.

It is found in the membrane. This chain is Cell number regulator 11 (CNR11), found in Zea mays (Maize).